A 181-amino-acid chain; its full sequence is ADP-ribosylation factor 1 (181 aa).

A lipid anchor (N-myristoyl glycine) is attached at Gly-2. GTP is bound by residues 24–31 (GLDAAGKT), 67–71 (DVGGQ), and 126–129 (NKQD).

This sequence belongs to the small GTPase superfamily. Arf family. In terms of assembly, interacts with AGD7 and GDAP1. GDP-locked form interacts with cytosolic tail of p24 proteins. Interacts with AGD5 at trans-Golgi network. Interacts with A.tumefaciens AK6b.

The protein resides in the golgi apparatus. It is found in the endosome. It localises to the trans-Golgi network. Its subcellular location is the early endosome. It carries out the reaction GTP + H2O = GDP + phosphate + H(+). Activated by AGD7 and AGD10. In terms of biological role, GTP-binding protein involved in protein trafficking; required for the sequence-specific vacuolar sorting route to the lytic vacuole, for the ER-to-Golgi transport and for the Golgi-derived transport to the plasma membrane. Involved in the recruitment of COPI and GDAP1 to membranes. Required for recycling of PIN auxin transporters (e.g. PIN1 and PIN2) in a fungal toxin brefeldin A (BFA)-dependent manner. Involved in various auxin-dependent developmental processes. This Arabidopsis thaliana (Mouse-ear cress) protein is ADP-ribosylation factor 1.